The sequence spans 446 residues: Tubulin beta-3 chain (446 aa).

The GTP site is built by Q11, E69, S138, G142, T143, G144, N204, and N226. A Mg(2+)-binding site is contributed by E69. The tract at residues 421-446 (EYQQYQDATAEEEDYEEEEEDEEVAA) is disordered. Over residues 429 to 446 (TAEEEDYEEEEEDEEVAA) the composition is skewed to acidic residues.

Belongs to the tubulin family. Dimer of alpha and beta chains. A typical microtubule is a hollow water-filled tube with an outer diameter of 25 nm and an inner diameter of 15 nM. Alpha-beta heterodimers associate head-to-tail to form protofilaments running lengthwise along the microtubule wall with the beta-tubulin subunit facing the microtubule plus end conferring a structural polarity. Microtubules usually have 13 protofilaments but different protofilament numbers can be found in some organisms and specialized cells. The cofactor is Mg(2+). In terms of tissue distribution, expressed in roots, second node, leaf sheaths, and suspension cultured cells.

The protein localises to the cytoplasm. The protein resides in the cytoskeleton. Tubulin is the major constituent of microtubules, a cylinder consisting of laterally associated linear protofilaments composed of alpha- and beta-tubulin heterodimers. Microtubules grow by the addition of GTP-tubulin dimers to the microtubule end, where a stabilizing cap forms. Below the cap, tubulin dimers are in GDP-bound state, owing to GTPase activity of alpha-tubulin. In Oryza sativa subsp. japonica (Rice), this protein is Tubulin beta-3 chain (TUBB3).